A 321-amino-acid chain; its full sequence is Bifunctional ligase/repressor BirA (321 aa).

A DNA-binding region (H-T-H motif) is located at residues 22 to 41 (GEQLGETLGMSRAAINKHIQ). One can recognise a BPL/LPL catalytic domain in the interval 67–254 (LNAKQILGQL…ELRAALELFE (188 aa)). Biotin-binding positions include 89 to 91 (STN), glutamine 112, 116 to 118 (RGR), and lysine 183.

This sequence belongs to the biotin--protein ligase family. In terms of assembly, monomer in solution. Interacts with BCCP. Homodimerizes to bind DNA. Interaction with the corepressor bio-5'-AMP increases dimerization.

The catalysed reaction is biotin + L-lysyl-[protein] + ATP = N(6)-biotinyl-L-lysyl-[protein] + AMP + diphosphate + H(+). With respect to regulation, the switch between the enzymatic activity and the repressor activity is regulated by cellular demand for biotin. The switch occurs by swapping of protein interaction partners by holoBirA. In conditions of high biotin demand, holoBirA associates with apoBCCP to transfer biotin. In conditions of low biotin demand, holoBirA dimerizes, binds DNA and represses transcription of the biotin operon. Acts both as a biotin--[acetyl-CoA-carboxylase] ligase and a biotin-operon repressor. In the presence of ATP, BirA activates biotin to form the BirA-biotinyl-5'-adenylate (BirA-bio-5'-AMP or holoBirA) complex. HoloBirA can either transfer the biotinyl moiety to the biotin carboxyl carrier protein (BCCP) subunit of acetyl-CoA carboxylase, or bind to the biotin operator site and inhibit transcription of the operon. This chain is Bifunctional ligase/repressor BirA, found in Escherichia coli (strain K12).